Reading from the N-terminus, the 311-residue chain is Porphobilinogen deaminase (311 aa).

The residue at position 242 (Cys-242) is an S-(dipyrrolylmethanemethyl)cysteine.

Belongs to the HMBS family. In terms of assembly, monomer. The cofactor is dipyrromethane.

It carries out the reaction 4 porphobilinogen + H2O = hydroxymethylbilane + 4 NH4(+). The protein operates within porphyrin-containing compound metabolism; protoporphyrin-IX biosynthesis; coproporphyrinogen-III from 5-aminolevulinate: step 2/4. In terms of biological role, tetrapolymerization of the monopyrrole PBG into the hydroxymethylbilane pre-uroporphyrinogen in several discrete steps. This chain is Porphobilinogen deaminase (hemC), found in Neisseria meningitidis serogroup B (strain ATCC BAA-335 / MC58).